The chain runs to 276 residues: Homeobox protein TOS8 (276 aa).

Over residues 176 to 185 the composition is skewed to polar residues; that stretch reads NSVRGSNNGY. A disordered region spans residues 176–199; the sequence is NSVRGSNNGYSAKEKKHKAHGKRS. Residues 189 to 199 show a composition bias toward basic residues; that stretch reads EKKHKAHGKRS. The segment at residues 194–256 is a DNA-binding region (homeobox; TALE-type); sequence AHGKRSNLPK…NARRRKIFSG (63 aa).

This sequence belongs to the TALE/CUP9 homeobox family.

Its subcellular location is the nucleus. This chain is Homeobox protein TOS8 (TOS8), found in Saccharomyces cerevisiae (strain ATCC 204508 / S288c) (Baker's yeast).